The sequence spans 500 residues: Galactofuranose transporter ATP-binding protein YtfR (500 aa).

ABC transporter domains are found at residues 10-245 and 259-497; these read LRTE…LGRE and LSDK…IMNA. An ATP-binding site is contributed by 42–49; that stretch reads GENGAGKS.

It belongs to the ABC transporter superfamily. As to quaternary structure, the complex is composed of two ATP-binding proteins (YtfR), two transmembrane proteins (YtfT and YjfF) and a solute-binding protein (YtfQ).

The protein resides in the cell inner membrane. It carries out the reaction D-galactofuranose(out) + ATP + H2O = D-galactofuranose(in) + ADP + phosphate + H(+). Functionally, part of the ABC transporter complex YtfQRT-YjfF involved in galactofuranose transport. Responsible for energy coupling to the transport system. This is Galactofuranose transporter ATP-binding protein YtfR (ytfR) from Escherichia coli (strain K12).